The following is a 114-amino-acid chain: MSTMKFCRECNNILYPKEDKEQSILLYACRNCDHQEAADNNCVYRNEVHHSVSEQTQILSDVASDPTLPRTKAVRCAKCQHGEAVFFQATARGEEGMTLFFVCCNPNCSHRWRE.

Cys-7, Cys-10, Cys-29, Cys-32, Cys-76, Cys-79, Cys-103, and Cys-108 together coordinate Zn(2+). The segment at 72–113 (KAVRCAKCQHGEAVFFQATARGEEGMTLFFVCCNPNCSHRWR) adopts a TFIIS-type zinc-finger fold.

The protein belongs to the archaeal RpoM/eukaryotic RPA12/RPB9/RPC11 RNA polymerase family. As to quaternary structure, component of the RNA polymerase II, IV and V complexes. Interacts with NRPD1.

It localises to the nucleus. Its subcellular location is the nucleolus. Functionally, DNA-dependent RNA polymerase catalyzes the transcription of DNA into RNA using the four ribonucleoside triphosphates as substrates. Component of RNA polymerase II which synthesizes mRNA precursors and many functional non-coding RNAs. Pol II is the central component of the basal RNA polymerase II transcription machinery. It is composed of mobile elements that move relative to each other. Component of RNA polymerases IV and V which mediate short-interfering RNAs (siRNA) accumulation and subsequent RNA-directed DNA methylation-dependent (RdDM) transcriptional gene silencing (TGS) of endogenous repeated sequences, including transposable elements. Required for RNA silencing. The sequence is that of DNA-directed RNA polymerases II, IV and V subunit 9B (NRPB9B) from Arabidopsis thaliana (Mouse-ear cress).